Consider the following 296-residue polypeptide: Fructose-bisphosphate aldolase class 1 (296 aa).

Glu175 functions as the Proton acceptor in the catalytic mechanism. The Schiff-base intermediate with dihydroxyacetone-P role is filled by Lys212.

Belongs to the class I fructose-bisphosphate aldolase family.

The enzyme catalyses beta-D-fructose 1,6-bisphosphate = D-glyceraldehyde 3-phosphate + dihydroxyacetone phosphate. It functions in the pathway carbohydrate degradation; glycolysis; D-glyceraldehyde 3-phosphate and glycerone phosphate from D-glucose: step 4/4. This chain is Fructose-bisphosphate aldolase class 1 (fda), found in Staphylococcus epidermidis (strain ATCC 12228 / FDA PCI 1200).